Here is a 1257-residue protein sequence, read N- to C-terminus: uncharacterized protein (1257 aa).

A disordered region spans residues 1–26; the sequence is MNFSNKPNKSRKKSNRKNKKSNKSNT. Basic residues predominate over residues 8 to 22; the sequence is NKSRKKSNRKNKKSN.

The protein resides in the virion. This is an uncharacterized protein from Acanthamoeba polyphaga mimivirus (APMV).